The chain runs to 116 residues: Peptidyl-tRNA hydrolase (116 aa).

The protein belongs to the PTH2 family.

The protein resides in the cytoplasm. The enzyme catalyses an N-acyl-L-alpha-aminoacyl-tRNA + H2O = an N-acyl-L-amino acid + a tRNA + H(+). Its function is as follows. The natural substrate for this enzyme may be peptidyl-tRNAs which drop off the ribosome during protein synthesis. The chain is Peptidyl-tRNA hydrolase (pth) from Methanococcus maripaludis (strain DSM 14266 / JCM 13030 / NBRC 101832 / S2 / LL).